The sequence spans 212 residues: Eukaryotic translation initiation factor 4E-4 (212 aa).

C143 and C147 are oxidised to a cystine.

This sequence belongs to the eukaryotic initiation factor 4E family. In terms of assembly, eIF4F is a multi-subunit complex, the composition of which varies with external and internal environmental conditions. It is composed of at least eIF4A, eIF4E and eIF4G. eIF4E is also known to interact with other partners. As to expression, enriched in somatic cells.

Functionally, recognizes and binds the 7-methylguanosine-containing mRNA cap during an early step in the initiation of protein synthesis and facilitates ribosome binding by inducing the unwinding of the mRNAs secondary structures. All 5 eIF4E proteins bind monomethyl cap structures. Only ife-1, ife-2 and ife-5 bind trimethyl cap structures which result from trans-splicing. Translation of trimethyl cap structure mRNAs may be regulated by intracellular redox state; disulfide bonds change the width and depth of the cap-binding cavity determining selectivity to mRNA caps. This is Eukaryotic translation initiation factor 4E-4 (ife-4) from Caenorhabditis elegans.